Here is a 276-residue protein sequence, read N- to C-terminus: Phospholipid phosphatase 2 (276 aa).

The Cytoplasmic portion of the chain corresponds to 1-4 (MERR). Residues 5–25 (WVFVLLDVLCVLVASLPFIIL) form a helical membrane-spanning segment. At 26–51 (TLVNAPYKRGFYCGDDSIRYPYRPDT) the chain is on the lumenal side. The helical transmembrane segment at 52–72 (ITHGLMAGVIITATVILVSLG) threads the bilayer. Residues 73–87 (EAYLVYTDRLYSRSN) are Cytoplasmic-facing. A helical transmembrane segment spans residues 88-108 (FNNYVAAIYKVLGTFLFGAAV). Residues 109–161 (SQSLTDLAKYMIGRLRPSFLAVCDPDWSQVNCSGYVQLEVCRGSPANVTEARL) are Lumenal-facing. The tract at residues 117–125 (KYMIGRLRP) is phosphatase sequence motif I. N-linked (GlcNAc...) asparagine glycosylation is found at Asn139 and Asn155. Residues 162–182 (SFYSGHSSFGMYCMLFLALYV) form a helical membrane-spanning segment. Positions 164 to 167 (YSGH) are phosphatase sequence motif II. Catalysis depends on His167, which acts as the Proton donors. The Cytoplasmic portion of the chain corresponds to 183–189 (QARLCWK). The chain crosses the membrane as a helical span at residues 190 to 210 (WARLLRPTVQFFLVAFAIYVG). Residues 211-218 (YTRVSDHK) are Lumenal-facing. A phosphatase sequence motif III region spans residues 212–223 (TRVSDHKHHWSD). The active-site Nucleophile is His219. Residues 219–239 (HHWSDVLVGLLQGALVACLTV) traverse the membrane as a helical segment. The Cytoplasmic portion of the chain corresponds to 240-276 (RYVSDFFKSRPPQPCQEDEVPERKPSLSLTLTLGDRP). The interval 251–276 (PQPCQEDEVPERKPSLSLTLTLGDRP) is disordered.

This sequence belongs to the PA-phosphatase related phosphoesterase family. In terms of assembly, forms functional homodimers and homooligomers. Can also form heterooligomers with PLPP1 and PLPP3. In terms of processing, N-glycosylated. In terms of tissue distribution, expressed at high levels in lung, liver and kidney; at low levels in heart and brain, and was not detected in skeletal muscle.

It is found in the membrane. The protein localises to the cell membrane. The protein resides in the early endosome membrane. It localises to the endoplasmic reticulum membrane. It catalyses the reaction a 1,2-diacyl-sn-glycero-3-phosphate + H2O = a 1,2-diacyl-sn-glycerol + phosphate. It carries out the reaction 1,2-dihexadecanoyl-sn-glycero-3-phosphate + H2O = 1,2-dihexadecanoyl-sn-glycerol + phosphate. The catalysed reaction is 1,2-di-(9Z-octadecenoyl)-sn-glycero-3-phosphate + H2O = 1,2-di-(9Z-octadecenoyl)-sn-glycerol + phosphate. The enzyme catalyses a monoacyl-sn-glycero-3-phosphate + H2O = a monoacylglycerol + phosphate. It catalyses the reaction (9Z)-octadecenoyl-sn-glycero-3-phosphate + H2O = (9Z-octadecenoyl)-glycerol + phosphate. It carries out the reaction sphing-4-enine 1-phosphate + H2O = sphing-4-enine + phosphate. The catalysed reaction is an N-acylsphing-4-enine 1-phosphate + H2O = an N-acylsphing-4-enine + phosphate. The enzyme catalyses N-(octanoyl)-sphing-4-enine-1-phosphate + H2O = N-octanoylsphing-4-enine + phosphate. It catalyses the reaction N-(9Z-octadecenoyl)-ethanolamine phosphate + H2O = N-(9Z-octadecenoyl) ethanolamine + phosphate. Its pathway is lipid metabolism; phospholipid metabolism. With respect to regulation, magnesium-independent phospholipid phosphatase. Insensitive to N-ethylmaleimide. Functionally, magnesium-independent phospholipid phosphatase that catalyzes the dephosphorylation of a variety of glycerolipid and sphingolipid phosphate esters including phosphatidate/PA, lysophosphatidate/LPA, sphingosine 1-phosphate/S1P and ceramide 1-phosphate/C1P. Has no apparent extracellular phosphatase activity and therefore most probably acts intracellularly. Also acts on N-oleoyl ethanolamine phosphate/N-(9Z-octadecenoyl)-ethanolamine phosphate, a potential physiological compound. Through dephosphorylation of these bioactive lipid mediators produces new bioactive compounds and may regulate signal transduction in different cellular processes. Indirectly regulates, for instance, cell cycle G1/S phase transition through its phospholipid phosphatase activity. The sequence is that of Phospholipid phosphatase 2 from Mus musculus (Mouse).